A 409-amino-acid polypeptide reads, in one-letter code: MQKSLATFFISPPEIPTQHGPDNILYDFNDGARVLLPEGKWHVRLLDADSGNILFCCDINNGWVTSSKKYFVRFRIQVFRQGEDSPLLDETLNLTDRDVLISFPTGTLGDLLGWFPYAERFQSLHQCRLECTMAQDIIDLLAPQYPQICFSTPEKPRTTEPYATYRVGLYFGGDTNNQPVDFRQVGFHRSAGYILGVDPREAPVRLNLSAPCTIREPYVCIATQSTCQAKYWNNGTGWSEVVAHLKSLGYRVLCIDREAHYGQGFVWNHIPWGAEDFTGSFPLQERVNLLRHASFFIGLASGLSWLAWATGIPVVLISGFSLPDSEFYTPWRVFNSHGCNGCWDDTSLNFDHKDFLWCPRHKNTDRQFECTRLITGTQVNGVISRLHASLMKQGDKACLTKGTNNEQGL.

Residues threonine 107, leucine 108, and glycine 109 each contribute to the ADP-D-glycero-beta-D-manno-heptose site. The Proton acceptor role is filled by aspartate 110. 6 residues coordinate ADP-D-glycero-beta-D-manno-heptose: glutamine 224, threonine 226, lysine 230, arginine 257, glycine 302, and glutamate 326. Residues cysteine 339, cysteine 342, cysteine 358, and cysteine 370 each coordinate Fe(3+).

Belongs to the glycosyltransferase 9 family. Homododecamer composed of 6 homodimers forming a ring. It depends on Fe(3+) as a cofactor.

The protein resides in the cytoplasm. It carries out the reaction ADP-D-glycero-beta-D-manno-heptose + L-seryl-[protein] = O-(D-glycero-alpha-D-manno-heptosyl)-L-seryl-[protein] + ADP + H(+). The catalysed reaction is ADP-L-glycero-beta-D-manno-heptose + L-seryl-[protein] = O-(L-glycero-alpha-D-manno-heptosyl)-L-seryl-[protein] + ADP + H(+). Functionally, glycosylates autotransporter CARC. By glycosylating CARC, involved in the colonization of the mouse host gastrointestinal tract. This is Autotransproter heptosyltransferase BAHTCr from Citrobacter rodentium (strain ICC168) (Citrobacter freundii biotype 4280).